The chain runs to 344 residues: Tripartite motif-containing protein 44 (344 aa).

Residues 69-165 (PPASGDDALP…ETEAESEFDP (97 aa)) are disordered. Positions 88–165 (EGEVESEVGE…ETEAESEFDP (78 aa)) are enriched in acidic residues. Residues 174 to 215 (VAKRKCPDHGLDLSTYCQEDRQLICVLCPVIGAHRGHQLSTL) form a B box-type zinc finger. Residues cysteine 179, histidine 182, cysteine 201, and histidine 207 each coordinate Zn(2+). Residues 290 to 325 (AHVTEILADIQSHMDRLMTQMAQAKEQLDTSNESAE) adopt a coiled-coil conformation. The tract at residues 309-344 (QMAQAKEQLDTSNESAEPKAEGDEEGPSGASEEEDT) is disordered. Residues 330-344 (GDEEGPSGASEEEDT) show a composition bias toward acidic residues. A phosphoserine mark is found at serine 336 and serine 339.

As to quaternary structure, interacts (via coiled coil) with TRIM17 (via coiled coil).

Its function is as follows. May play a role in the process of differentiation and maturation of neuronal cells. May regulate the activity of TRIM17. Is a negative regulator of PAX6 expression. This Rattus norvegicus (Rat) protein is Tripartite motif-containing protein 44 (Trim44).